A 288-amino-acid chain; its full sequence is MAQHPLVQRLLDVKFDTKRFVAIATHGPKNFPDAEGRKFFADHFDVTIQASILYMVVVFGTKWFMRNRQPFQLTIPLNIWNFILAAFSIAGAVKMTPEFFGTIANKGIVASYCKVFDFTKGENGYWVWLFMASKLFELVDTIFLVLRKRPLMFLHWYHHILTMIYAWYSHPLTPGFNRYGIYLNFVVHAFMYSYYFLRSMKIRVPGFIAQAITSLQIVQFIISCAVLAHLGYLMHFTNANCDFEPSVFKLAVFMDTTYLALFVNFFLQSYVLRGGKDKYKAVPKKKNN.

A run of 7 helical transmembrane segments spans residues 39-59, 73-93, 126-146, 150-170, 180-197, 217-237, and 247-267; these read FFAD…VVVF, LTIP…AGAV, WVWL…FLVL, PLMF…WYSH, GIYL…YYFL, IVQF…MHFT, and VFKL…NFFL.

Belongs to the ELO family.

The protein resides in the membrane. The catalysed reaction is (6Z,9Z,12Z)-octadecatrienoyl-CoA + malonyl-CoA + H(+) = (8Z,11Z,14Z)-3-oxoeicosatrienoyl-CoA + CO2 + CoA. It catalyses the reaction (6Z,9Z,12Z,15Z)-octadecatetraenoyl-CoA + malonyl-CoA + H(+) = (8Z,11Z,14Z,17Z)-3-oxoicosatetraenoyl-CoA + CO2 + CoA. The enzyme catalyses (9Z)-hexadecenoyl-CoA + malonyl-CoA + H(+) = 3-oxo-(11Z)-octadecenoyl-CoA + CO2 + CoA. The protein operates within lipid metabolism; fatty acid biosynthesis. In terms of biological role, catalyzes the first and rate-limiting reaction of the four reactions that constitute the long-chain fatty acids elongation cycle. Uses malonyl-CoA to add 2 carbons per cycle to the chain of long-chain fatty acids. Condensing enzyme that catalyzes the elongation of monounsaturated (MUFA) and polyunsaturated (PUFA) fatty acids that are involved in multiple biological processes as precursors of membrane lipids and lipid mediators. The protein is Long chain fatty acid elongase 1 of Caenorhabditis elegans.